We begin with the raw amino-acid sequence, 90 residues long: Small ribosomal subunit protein uS19 (90 aa).

It belongs to the universal ribosomal protein uS19 family.

Functionally, protein S19 forms a complex with S13 that binds strongly to the 16S ribosomal RNA. The polypeptide is Small ribosomal subunit protein uS19 (Clostridium beijerinckii (strain ATCC 51743 / NCIMB 8052) (Clostridium acetobutylicum)).